The chain runs to 65 residues: Large ribosomal subunit protein bL31 (65 aa).

Zn(2+)-binding residues include Cys16, Cys18, Cys36, and Cys39.

The protein belongs to the bacterial ribosomal protein bL31 family. Type A subfamily. Part of the 50S ribosomal subunit. Zn(2+) serves as cofactor.

In terms of biological role, binds the 23S rRNA. The polypeptide is Large ribosomal subunit protein bL31 (Desulfitobacterium hafniense (strain DSM 10664 / DCB-2)).